A 145-amino-acid chain; its full sequence is Protein SprT-like (145 aa).

One can recognise a SprT-like domain in the interval 5–141 (DYVREVSLAD…CGRCHGRLIK (137 aa)). Histidine 64 lines the Zn(2+) pocket. The active site involves glutamate 65. Histidine 68 is a binding site for Zn(2+).

It belongs to the SprT family. Zn(2+) serves as cofactor.

The protein resides in the cytoplasm. The polypeptide is Protein SprT-like (Streptococcus equi subsp. zooepidemicus (strain H70)).